A 191-amino-acid chain; its full sequence is FMN reductase (NADH) RutF (191 aa).

The protein belongs to the non-flavoprotein flavin reductase family. RutF subfamily.

The catalysed reaction is FMNH2 + NAD(+) = FMN + NADH + 2 H(+). Its function is as follows. Catalyzes the reduction of FMN to FMNH2 which is used to reduce pyrimidine by RutA via the Rut pathway. The chain is FMN reductase (NADH) RutF from Escherichia coli O1:K1 / APEC.